The following is a 210-amino-acid chain: Keratin-associated protein 26-1 (210 aa).

It belongs to the PMG family. In terms of assembly, interacts with hair keratins. As to expression, localized high up in the well differentiated portion of the hair follicle cuticle (about 10-15 cell layers above the apex of the dermal papilla).

Functionally, in the hair cortex, hair keratin intermediate filaments are embedded in an interfilamentous matrix, consisting of hair keratin-associated proteins (KRTAP), which are essential for the formation of a rigid and resistant hair shaft through their extensive disulfide bond cross-linking with abundant cysteine residues of hair keratins. The matrix proteins include the high-sulfur and high-glycine-tyrosine keratins. The protein is Keratin-associated protein 26-1 (KRTAP26-1) of Homo sapiens (Human).